We begin with the raw amino-acid sequence, 328 residues long: Cytochrome f (328 aa).

The signal sequence occupies residues 1 to 44; the sequence is MRTPDFSAIWQASKQLTARIILLAFATFALYVFHDLAFPQGAAA. Positions 45, 66, 69, and 70 each coordinate heme. Residues 294–314 traverse the membrane as a helical segment; that stretch reads IKGLMVFLAGIMLAQILLVIK.

It belongs to the cytochrome f family. The 4 large subunits of the cytochrome b6-f complex are cytochrome b6, subunit IV (17 kDa polypeptide, PetD), cytochrome f and the Rieske protein, while the 4 small subunits are PetG, PetL, PetM and PetN. The complex functions as a dimer. Requires heme as cofactor.

The protein localises to the cellular thylakoid membrane. Functionally, component of the cytochrome b6-f complex, which mediates electron transfer between photosystem II (PSII) and photosystem I (PSI), cyclic electron flow around PSI, and state transitions. This is Cytochrome f from Rippkaea orientalis (strain PCC 8801 / RF-1) (Cyanothece sp. (strain PCC 8801)).